A 264-amino-acid polypeptide reads, in one-letter code: Non-homologous end-joining factor xrc4 (264 aa).

A compositionally biased stretch (basic and acidic residues) spans 173–186 (RNNEDNEDNHHINY). Residues 173-264 (RNNEDNEDNH…SHESSETVSE (92 aa)) are disordered. Over residues 200–209 (QEGVNSSAVS) the composition is skewed to polar residues. Residues 248–264 (DDSHRRSSHESSETVSE) show a composition bias toward basic and acidic residues.

The protein belongs to the XRCC4-XLF family. XRCC4 subfamily. As to quaternary structure, interacts with lig4; the interaction is direct.

It localises to the nucleus. Its function is as follows. Involved in double-strand break repair via non-homologous end joining (NHEJ); the repair of a double-strand break in DNA in which the two broken ends are rejoined with little or no sequence complementarity. The protein is Non-homologous end-joining factor xrc4 of Schizosaccharomyces pombe (strain 972 / ATCC 24843) (Fission yeast).